Here is a 217-residue protein sequence, read N- to C-terminus: Zinc finger CCHC-type and RNA-binding motif-containing protein 1 (217 aa).

Residues 10 to 88 form the RRM domain; that stretch reads STVYVSNLPF…RVIKASIAID (79 aa). Residues 105 to 122 form a CCHC-type zinc finger; that stretch reads SKCYECGESGHLSYACPK. Positions 120 to 217 are disordered; that stretch reads CPKNMLGERE…YFSDEEELSD (98 aa). The segment covering 145–163 has biased composition (acidic residues); that stretch reads PEEEIEEVEESEDEGEDPA. Phosphoserine is present on residues S155, S210, and S216.

As to quaternary structure, component of the U11/U12 snRNPs that are part of the U12-type spliceosome.

It is found in the nucleus. The protein localises to the nucleoplasm. In Homo sapiens (Human), this protein is Zinc finger CCHC-type and RNA-binding motif-containing protein 1 (ZCRB1).